We begin with the raw amino-acid sequence, 148 residues long: Single-stranded DNA-binding protein 2 (148 aa).

The region spanning 6–108 (MNHITVSGLV…IEAESFGHDL (103 aa)) is the SSB domain.

As to quaternary structure, homotetramer.

The protein is Single-stranded DNA-binding protein 2 (ssb2) of Tropheryma whipplei (strain TW08/27) (Whipple's bacillus).